Reading from the N-terminus, the 341-residue chain is MILLENVKKIYKAKSGDVTAVDNANLKIDKGEIFGVIGYSGAGKSSLIRLFNQLEKPTSGQITIANRVISAITGSELRKARQEIGMIFQHFNLLWSRTVRENIEFPLEIAGVDKAKRRKRVDELIHLVGLEGRGDAYPSQLSGGQKQRVGIARALANNPQVLLCDEATSALDPETTDQILDLLLDINKRLGLTIVLITHEMHVIRKICNRVAVMEKGKIVETGPVLDVFRNPQQDITKRFVQQLTDSEDTNETIESLIEKYPDGKVVRLQFIGEAVERPVLQRLMQRSDIEVSILQGNIAQTNNGSYGSLVVHLNGEETAIQQAIEGIHQDQVELEVIAHG.

One can recognise an ABC transporter domain in the interval 2 to 241 (ILLENVKKIY…PQQDITKRFV (240 aa)). 38 to 45 (GYSGAGKS) is a binding site for ATP.

This sequence belongs to the ABC transporter superfamily. Methionine importer (TC 3.A.1.24) family. The complex is composed of two ATP-binding proteins (MetN), two transmembrane proteins (MetI) and a solute-binding protein (MetQ).

It is found in the cell membrane. The catalysed reaction is L-methionine(out) + ATP + H2O = L-methionine(in) + ADP + phosphate + H(+). It catalyses the reaction D-methionine(out) + ATP + H2O = D-methionine(in) + ADP + phosphate + H(+). In terms of biological role, part of the ABC transporter complex MetNIQ involved in methionine import. Responsible for energy coupling to the transport system. This chain is Methionine import ATP-binding protein MetN 3, found in Bacillus cereus (strain ZK / E33L).